A 188-amino-acid chain; its full sequence is MIIIMDNGGQYVHRIWRTLRYLGVEAKIIPNTTPLDEIKAMKPKGIIFSGGPSLENTGNCEKILEHYEEFNVPILGICLGHQLIAKFFGGEVGRGEKAEYSLVEIEIIDENDIFKGLPRKVRVWESHMDEVKKLPPKFKLLARSDTCPVEAMKHEELPIYGVQFHPEVAHTEHGADILRNFAKICGEL.

In terms of domain architecture, Glutamine amidotransferase type-1 spans 1 to 188 (MIIIMDNGGQ…RNFAKICGEL (188 aa)). Catalysis depends on cysteine 78, which acts as the Nucleophile. Active-site residues include histidine 165 and glutamate 167.

As to quaternary structure, heterodimer composed of a glutamine amidotransferase subunit (A) and a GMP-binding subunit (B).

It catalyses the reaction XMP + L-glutamine + ATP + H2O = GMP + L-glutamate + AMP + diphosphate + 2 H(+). It functions in the pathway purine metabolism; GMP biosynthesis; GMP from XMP (L-Gln route): step 1/1. Its function is as follows. Catalyzes the synthesis of GMP from XMP. The sequence is that of GMP synthase [glutamine-hydrolyzing] subunit A from Pyrococcus furiosus (strain ATCC 43587 / DSM 3638 / JCM 8422 / Vc1).